Consider the following 259-residue polypeptide: Ribonuclease HII (259 aa).

One can recognise an RNase H type-2 domain in the interval 70–258; that stretch reads TLIAGIDEVG…VKSLVLGKKE (189 aa). 3 residues coordinate a divalent metal cation: aspartate 76, glutamate 77, and aspartate 168.

The protein belongs to the RNase HII family. Mn(2+) is required as a cofactor. The cofactor is Mg(2+).

It localises to the cytoplasm. The enzyme catalyses Endonucleolytic cleavage to 5'-phosphomonoester.. Its function is as follows. Endonuclease that specifically degrades the RNA of RNA-DNA hybrids. The protein is Ribonuclease HII of Streptococcus pneumoniae serotype 19F (strain G54).